Consider the following 390-residue polypeptide: tRNA(Met) cytidine acetate ligase (390 aa).

ATP is bound by residues Val-7–His-20, Gly-101, Asn-162, and Arg-187.

This sequence belongs to the TmcAL family.

It localises to the cytoplasm. The catalysed reaction is cytidine(34) in elongator tRNA(Met) + acetate + ATP = N(4)-acetylcytidine(34) in elongator tRNA(Met) + AMP + diphosphate. In terms of biological role, catalyzes the formation of N(4)-acetylcytidine (ac(4)C) at the wobble position of elongator tRNA(Met), using acetate and ATP as substrates. First activates an acetate ion to form acetyladenylate (Ac-AMP) and then transfers the acetyl group to tRNA to form ac(4)C34. This Listeria monocytogenes serotype 4a (strain HCC23) protein is tRNA(Met) cytidine acetate ligase.